We begin with the raw amino-acid sequence, 415 residues long: Transfer protein TraSA (415 aa).

The region spanning 127–326 is the FtsK domain; the sequence is DGAVHYRDYR…HRVNDETSAN (200 aa). ATP is bound at residue 145–152; it reads GATESGKS.

The protein is Transfer protein TraSA (traSA) of Streptomyces ambofaciens.